A 912-amino-acid polypeptide reads, in one-letter code: Probable dipeptidyl-aminopeptidase B (912 aa).

The segment at 1-74 (MSSALSPEGD…GPFLGPGASL (74 aa)) is disordered. Residues 1–85 (MSSALSPEGD…REPMDRGLRR (85 aa)) lie on the Cytoplasmic side of the membrane. Positions 16-27 (DSLSSVSTTSLV) are enriched in low complexity. Residues 30–50 (RIQEKTEMDADNDKEKDPRAL) show a composition bias toward basic and acidic residues. Acidic residues predominate over residues 51-63 (DDEDPLRDEDDLE). A helical; Signal-anchor for type II membrane protein membrane pass occupies residues 86–106 (ILIIVAVVFIGGWLAGLGIFI). Residues 107-912 (ASGSYHHESD…KRHMVPQALV (806 aa)) are Vacuolar-facing. N-linked (GlcNAc...) asparagine glycosylation is present at N344. Catalysis depends on S749, which acts as the Charge relay system. N808 carries an N-linked (GlcNAc...) asparagine glycan. Catalysis depends on charge relay system residues D826 and H859. Residues 892-912 (PQPQKDPVEKEKRHMVPQALV) are disordered.

The protein belongs to the peptidase S9B family.

It is found in the vacuole membrane. The catalysed reaction is Release of an N-terminal dipeptide, Xaa-Yaa-|-Zaa-, from a polypeptide, preferentially when Yaa is Pro, provided Zaa is neither Pro nor hydroxyproline.. Functionally, type IV dipeptidyl-peptidase which removes N-terminal dipeptides sequentially from polypeptides having unsubstituted N-termini provided that the penultimate residue is proline. This chain is Probable dipeptidyl-aminopeptidase B (DAPB), found in Fusarium vanettenii (strain ATCC MYA-4622 / CBS 123669 / FGSC 9596 / NRRL 45880 / 77-13-4) (Fusarium solani subsp. pisi).